Here is a 232-residue protein sequence, read N- to C-terminus: tRNA-uridine aminocarboxypropyltransferase (232 aa).

The Zn(2+) site is built by Cys-31, Cys-34, Cys-41, and Cys-43. Residues 137–140 (DGTW) carry the DXTW motif.

The protein belongs to the TDD superfamily. DTWD2 family. TapT subfamily. In terms of assembly, monomer in solution.

It carries out the reaction a uridine in tRNA + S-adenosyl-L-methionine = a 3-[(3S)-3-amino-3-carboxypropyl]uridine in tRNA + S-methyl-5'-thioadenosine + H(+). It catalyses the reaction uridine(47) in tRNA(Phe) + S-adenosyl-L-methionine = 3-[(3S)-3-amino-3-carboxypropyl]uridine(47) in tRNA(Phe) + S-methyl-5'-thioadenosine + H(+). Its activity is regulated as follows. The degree of the acp3U modification at U47 is dependent on the presence of the m7G modification at the preceding nucleotide G46. It also depends on medium conditions. Catalyzes the formation of 3-(3-amino-3-carboxypropyl)uridine (acp3U) at position 47 of tRNAs. Acp3U47 confers thermal stability on tRNA. This chain is tRNA-uridine aminocarboxypropyltransferase, found in Escherichia coli (strain K12).